A 712-amino-acid chain; its full sequence is Phosphomethylpyrimidine synthase (712 aa).

Residues 14–49 (AIDITAPESTIPNKSKVPNKSAESSQSTVPKAPSRR) are disordered. A compositionally biased stretch (polar residues) spans 20–42 (PESTIPNKSKVPNKSAESSQSTV). Residues N283, M312, Y341, H377, 397–399 (SRG), 438–441 (DGMR), and E477 contribute to the substrate site. H481 contacts Zn(2+). Position 504 (Y504) interacts with substrate. H545 lines the Zn(2+) pocket. Residues C625, C628, and C633 each contribute to the [4Fe-4S] cluster site.

It belongs to the ThiC family. Homodimer. [4Fe-4S] cluster is required as a cofactor.

The enzyme catalyses 5-amino-1-(5-phospho-beta-D-ribosyl)imidazole + S-adenosyl-L-methionine = 4-amino-2-methyl-5-(phosphooxymethyl)pyrimidine + CO + 5'-deoxyadenosine + formate + L-methionine + 3 H(+). It functions in the pathway cofactor biosynthesis; thiamine diphosphate biosynthesis. In terms of biological role, catalyzes the synthesis of the hydroxymethylpyrimidine phosphate (HMP-P) moiety of thiamine from aminoimidazole ribotide (AIR) in a radical S-adenosyl-L-methionine (SAM)-dependent reaction. In Shewanella putrefaciens (strain CN-32 / ATCC BAA-453), this protein is Phosphomethylpyrimidine synthase.